A 524-amino-acid polypeptide reads, in one-letter code: Translation initiation factor eIF2B subunit delta (524 aa).

A disordered region spans residues 1 to 155 (MAAVAVAVRE…EHTPADDPTL (155 aa)). N-acetylalanine is present on alanine 2. Composition is skewed to basic and acidic residues over residues 8 to 20 (VREE…KTEL) and 31 to 40 (LTQEEKLQLR). Serine 12 bears the Phosphoserine mark. A compositionally biased stretch (basic residues) spans 41–51 (KEKKQQKKKRK). Residue threonine 86 is modified to Phosphothreonine. The span at 96–121 (SKAELRAERRAKQEAERALKQARKGE) shows a compositional bias: basic and acidic residues. Positions 130-140 (CPSTAGETTSG) are enriched in polar residues. The interval 171 to 180 (RKDYGSKVSL) is may bind the chemical integrated stress response (ISR) inhibitor ISRIB.

This sequence belongs to the eIF-2B alpha/beta/delta subunits family. As to quaternary structure, component of the translation initiation factor 2B (eIF2B) complex which is a heterodecamer of two sets of five different subunits: alpha, beta, gamma, delta and epsilon. Subunits alpha, beta and delta comprise a regulatory subcomplex and subunits epsilon and gamma comprise a catalytic subcomplex. Within the complex, the hexameric regulatory complex resides at the center, with the two heterodimeric catalytic subcomplexes bound on opposite sides.

It localises to the cytoplasm. The protein resides in the cytosol. With respect to regulation, activated by the chemical integrated stress response (ISR) inhibitor ISRIB which stimulates guanine nucleotide exchange factor activity for both phosphorylated and unphosphorylated eIF2. Its function is as follows. Acts as a component of the translation initiation factor 2B (eIF2B) complex, which catalyzes the exchange of GDP for GTP on eukaryotic initiation factor 2 (eIF2) gamma subunit. Its guanine nucleotide exchange factor activity is repressed when bound to eIF2 complex phosphorylated on the alpha subunit, thereby limiting the amount of methionyl-initiator methionine tRNA available to the ribosome and consequently global translation is repressed. This chain is Translation initiation factor eIF2B subunit delta (Eif2b4), found in Mus musculus (Mouse).